The sequence spans 572 residues: Light-independent protochlorophyllide reductase subunit N (572 aa).

Residues Cys-106, Cys-131, and Cys-191 each coordinate [4Fe-4S] cluster. The tract at residues 249 to 268 (SLDSMKLPSGGREKQINDVN) is disordered.

It belongs to the BchN/ChlN family. Protochlorophyllide reductase is composed of three subunits; ChlL, ChlN and ChlB. Forms a heterotetramer of two ChlB and two ChlN subunits. [4Fe-4S] cluster is required as a cofactor.

The protein localises to the plastid. The protein resides in the chloroplast. It carries out the reaction chlorophyllide a + oxidized 2[4Fe-4S]-[ferredoxin] + 2 ADP + 2 phosphate = protochlorophyllide a + reduced 2[4Fe-4S]-[ferredoxin] + 2 ATP + 2 H2O. Its pathway is porphyrin-containing compound metabolism; chlorophyll biosynthesis (light-independent). Its function is as follows. Component of the dark-operative protochlorophyllide reductase (DPOR) that uses Mg-ATP and reduced ferredoxin to reduce ring D of protochlorophyllide (Pchlide) to form chlorophyllide a (Chlide). This reaction is light-independent. The NB-protein (ChlN-ChlB) is the catalytic component of the complex. The sequence is that of Light-independent protochlorophyllide reductase subunit N from Oltmannsiellopsis viridis (Marine flagellate).